Consider the following 439-residue polypeptide: Xylose isomerase (439 aa).

Active-site residues include H100 and D103. The Mg(2+) site is built by E231, E267, H270, D295, D306, D308, and D338.

It belongs to the xylose isomerase family. As to quaternary structure, homotetramer. Mg(2+) serves as cofactor.

The protein resides in the cytoplasm. The enzyme catalyses alpha-D-xylose = alpha-D-xylulofuranose. This chain is Xylose isomerase, found in Rhodopirellula baltica (strain DSM 10527 / NCIMB 13988 / SH1).